Consider the following 325-residue polypeptide: GMP reductase (325 aa).

Cys-174 serves as the catalytic Thioimidate intermediate. 203 to 226 provides a ligand contact to NADP(+); the sequence is IIADGGIRTHGDIAKSIRFGATMV.

It belongs to the IMPDH/GMPR family. GuaC type 2 subfamily.

It carries out the reaction IMP + NH4(+) + NADP(+) = GMP + NADPH + 2 H(+). Catalyzes the irreversible NADPH-dependent deamination of GMP to IMP. It functions in the conversion of nucleobase, nucleoside and nucleotide derivatives of G to A nucleotides, and in maintaining the intracellular balance of A and G nucleotides. In Helicobacter pylori (strain J99 / ATCC 700824) (Campylobacter pylori J99), this protein is GMP reductase.